Consider the following 209-residue polypeptide: Urease accessory protein UreE (209 aa).

Over residues 170–196 the composition is skewed to basic and acidic residues; the sequence is EHHGHSHSHSHDHDHDHDHDHDHDHQH. A disordered region spans residues 170 to 209; sequence EHHGHSHSHSHDHDHDHDHDHDHDHQHGPSCSHGHHHGHR.

It belongs to the UreE family.

Its subcellular location is the cytoplasm. Functionally, involved in urease metallocenter assembly. Binds nickel. Probably functions as a nickel donor during metallocenter assembly. The protein is Urease accessory protein UreE of Burkholderia mallei (strain NCTC 10247).